The primary structure comprises 327 residues: Biotin synthase (327 aa).

Positions 49-282 constitute a Radical SAM core domain; it reads FNKEKIDLCS…KKVIRLCGGR (234 aa). Residues Cys-67, Cys-71, and Cys-74 each contribute to the [4Fe-4S] cluster site. Ser-110, Cys-142, Cys-201, and Arg-277 together coordinate [2Fe-2S] cluster.

This sequence belongs to the radical SAM superfamily. Biotin synthase family. As to quaternary structure, homodimer. [4Fe-4S] cluster serves as cofactor. Requires [2Fe-2S] cluster as cofactor.

The enzyme catalyses (4R,5S)-dethiobiotin + (sulfur carrier)-SH + 2 reduced [2Fe-2S]-[ferredoxin] + 2 S-adenosyl-L-methionine = (sulfur carrier)-H + biotin + 2 5'-deoxyadenosine + 2 L-methionine + 2 oxidized [2Fe-2S]-[ferredoxin]. The protein operates within cofactor biosynthesis; biotin biosynthesis; biotin from 7,8-diaminononanoate: step 2/2. Functionally, catalyzes the conversion of dethiobiotin (DTB) to biotin by the insertion of a sulfur atom into dethiobiotin via a radical-based mechanism. The sequence is that of Biotin synthase from Methanococcus maripaludis (strain C7 / ATCC BAA-1331).